The chain runs to 676 residues: Protein kinase C delta type (676 aa).

One can recognise a C2 domain in the interval 1–106; that stretch reads MAPFLRIAFN…KNNGKAEFWL (106 aa). 2 positions are modified to phosphothreonine: Thr-43 and Thr-50. Tyr-64 is modified (phosphotyrosine). Ser-130 is modified (phosphoserine). Thr-141 carries the phosphothreonine modification. Tyr-155 is subject to Phosphotyrosine. A Phorbol-ester/DAG-type 1 zinc finger spans residues 158 to 208; sequence NHEFIATFFGQPTFCSVCKDFVWGLNKQGYKCRQCNAAIHKKCIDKIIGRC. A Phosphothreonine modification is found at Thr-218. The Phorbol-ester/DAG-type 2 zinc-finger motif lies at 230–280; sequence PHRFKVHNYMSPTFCDHCGSLLWGLVKQGLKCEDCGMNVHHKCREKVANLC. Residues Ser-299, Ser-302, and Ser-304 each carry the phosphoserine; by autocatalysis modification. Ser-307 carries the phosphoserine modification. Phosphotyrosine is present on Tyr-313. Tyr-334 bears the Phosphotyrosine; by SRC mark. In terms of domain architecture, Protein kinase spans 349 to 603; the sequence is FIFHKVLGKG…TGNIKIHPFF (255 aa). An ATP-binding site is contributed by 355–363; sequence LGKGSFGKV. Residue Tyr-374 is modified to Phosphotyrosine. Lys-378 provides a ligand contact to ATP. Phosphothreonine is present on Thr-451. The Proton acceptor role is filled by Asp-473. Ser-503 and Ser-506 each carry phosphoserine. Thr-507 carries the post-translational modification Phosphothreonine; by autocatalysis. Residue Tyr-567 is modified to Phosphotyrosine. The AGC-kinase C-terminal domain occupies 604 to 675; it reads KTINWTLLEK…VNPKFEHLLE (72 aa). Phosphoserine occurs at positions 645, 654, 658, and 664.

This sequence belongs to the protein kinase superfamily. AGC Ser/Thr protein kinase family. PKC subfamily. In terms of assembly, interacts with PDPK1 (via N-terminal region). Interacts with RAD9A. Interacts with CDCP1. Interacts with MUC1. Interacts with VASP. Interacts with CAVIN3. Interacts with PRKD2 (via N-terminus and zing-finger domain 1 and 2) in response to oxidative stress; the interaction is independent of PRKD2 tyrosine phosphorylation. Interacts with PLSC3; interaction is enhanced by UV irradiation. Interacts with PRKCH upstream open reading frame 2; the interaction leads to inhibition of kinase activity. Post-translationally, autophosphorylated and/or phosphorylated at Thr-507, within the activation loop; phosphorylation at Thr-507 is not a prerequisite for enzymatic activity. Autophosphorylated at Ser-299, Ser-302 and Ser-304. Upon TNFSF10/TRAIL treatment, phosphorylated at Tyr-155; phosphorylation is required for its translocation to the endoplasmic reticulum and cleavage by caspase-3. Phosphorylated at Tyr-313, Tyr-334 and Tyr-567; phosphorylation of Tyr-313 and Tyr-567 following thrombin or zymosan stimulation potentiates its kinase activity. Phosphorylated by protein kinase PDPK1; phosphorylation is inhibited by the apoptotic C-terminal cleavage product of PKN2. Phosphorylated at Tyr-313 through a SYK and SRC mechanism downstream of C-type lectin receptors activation, promoting its activation. Proteolytically cleaved into a catalytic subunit and a regulatory subunit by caspase-3 during apoptosis which results in kinase activation.

It localises to the cytoplasm. The protein localises to the perinuclear region. Its subcellular location is the nucleus. The protein resides in the cell membrane. It is found in the mitochondrion. It localises to the endomembrane system. It carries out the reaction L-seryl-[protein] + ATP = O-phospho-L-seryl-[protein] + ADP + H(+). It catalyses the reaction L-threonyl-[protein] + ATP = O-phospho-L-threonyl-[protein] + ADP + H(+). The enzyme catalyses L-tyrosyl-[protein] + ATP = O-phospho-L-tyrosyl-[protein] + ADP + H(+). Its activity is regulated as follows. Novel PKCs (PRKCD, PRKCE, PRKCH and PRKCQ) are calcium-insensitive, but activated by diacylglycerol (DAG) and phosphatidylserine. Three specific sites; Thr-507 (activation loop of the kinase domain), Ser-645 (turn motif) and Ser-664 (hydrophobic region), need to be phosphorylated for its full activation. Activated by caspase-3 (CASP3) cleavage during apoptosis. After cleavage, the pseudosubstrate motif in the regulatory subunit is released from the substrate recognition site of the catalytic subunit, which enables PRKCD to become constitutively activated. The catalytic subunit which displays properties of a sphingosine-dependent protein kinase is activated by D-erythro-sphingosine (Sph) or N,N-dimethyl-D-erythrosphingosine (DMS) or N,N,N-trimethyl-D-erythrosphingosine (TMS), but not by ceramide or Sph-1-P and is strongly inhibited by phosphatidylserine. Inhibited by PRKCH upstream open reading frame 2. Calcium-independent, phospholipid- and diacylglycerol (DAG)-dependent serine/threonine-protein kinase that plays contrasting roles in cell death and cell survival by functioning as a pro-apoptotic protein during DNA damage-induced apoptosis, but acting as an anti-apoptotic protein during cytokine receptor-initiated cell death, is involved in tumor suppression as well as survival of several cancers, is required for oxygen radical production by NADPH oxidase and acts as positive or negative regulator in platelet functional responses. Negatively regulates B cell proliferation and also has an important function in self-antigen induced B cell tolerance induction. Upon DNA damage, activates the promoter of the death-promoting transcription factor BCLAF1/Btf to trigger BCLAF1-mediated p53/TP53 gene transcription and apoptosis. In response to oxidative stress, interact with and activate CHUK/IKKA in the nucleus, causing the phosphorylation of p53/TP53. In the case of ER stress or DNA damage-induced apoptosis, can form a complex with the tyrosine-protein kinase ABL1 which trigger apoptosis independently of p53/TP53. In cytosol can trigger apoptosis by activating MAPK11 or MAPK14, inhibiting AKT1 and decreasing the level of X-linked inhibitor of apoptosis protein (XIAP), whereas in nucleus induces apoptosis via the activation of MAPK8 or MAPK9. Upon ionizing radiation treatment, is required for the activation of the apoptosis regulators BAX and BAK, which trigger the mitochondrial cell death pathway. Can phosphorylate MCL1 and target it for degradation which is sufficient to trigger for BAX activation and apoptosis. Is required for the control of cell cycle progression both at G1/S and G2/M phases. Mediates phorbol 12-myristate 13-acetate (PMA)-induced inhibition of cell cycle progression at G1/S phase by up-regulating the CDK inhibitor CDKN1A/p21 and inhibiting the cyclin CCNA2 promoter activity. In response to UV irradiation can phosphorylate CDK1, which is important for the G2/M DNA damage checkpoint activation. Can protect glioma cells from the apoptosis induced by TNFSF10/TRAIL, probably by inducing increased phosphorylation and subsequent activation of AKT1. Is highly expressed in a number of cancer cells and promotes cell survival and resistance against chemotherapeutic drugs by inducing cyclin D1 (CCND1) and hyperphosphorylation of RB1, and via several pro-survival pathways, including NF-kappa-B, AKT1 and MAPK1/3 (ERK1/2). Involved in antifungal immunity by mediating phosphorylation and activation of CARD9 downstream of C-type lectin receptors activation, promoting interaction between CARD9 and BCL10, followed by activation of NF-kappa-B and MAP kinase p38 pathways. Can also act as tumor suppressor upon mitogenic stimulation with PMA or TPA. In N-formyl-methionyl-leucyl-phenylalanine (fMLP)-treated cells, is required for NCF1 (p47-phox) phosphorylation and activation of NADPH oxidase activity, and regulates TNF-elicited superoxide anion production in neutrophils, by direct phosphorylation and activation of NCF1 or indirectly through MAPK1/3 (ERK1/2) signaling pathways. May also play a role in the regulation of NADPH oxidase activity in eosinophil after stimulation with IL5, leukotriene B4 or PMA. In collagen-induced platelet aggregation, acts a negative regulator of filopodia formation and actin polymerization by interacting with and negatively regulating VASP phosphorylation. Downstream of PAR1, PAR4 and CD36/GP4 receptors, regulates differentially platelet dense granule secretion; acts as a positive regulator in PAR-mediated granule secretion, whereas it negatively regulates CD36/GP4-mediated granule release. Phosphorylates MUC1 in the C-terminal and regulates the interaction between MUC1 and beta-catenin. The catalytic subunit phosphorylates 14-3-3 proteins (YWHAB, YWHAZ and YWHAH) in a sphingosine-dependent fashion. Phosphorylates ELAVL1 in response to angiotensin-2 treatment. Phosphorylates mitochondrial phospholipid scramblase 3 (PLSCR3), resulting in increased cardiolipin expression on the mitochondrial outer membrane which facilitates apoptosis. Phosphorylates SMPD1 which induces SMPD1 secretion. In Homo sapiens (Human), this protein is Protein kinase C delta type.